The sequence spans 185 residues: Ribosome maturation factor RimM (185 aa).

A PRC barrel domain is found at Glu-96 to Val-171. The tract at residues Ile-165 to Asp-185 is disordered.

This sequence belongs to the RimM family. As to quaternary structure, binds ribosomal protein uS19.

The protein resides in the cytoplasm. Functionally, an accessory protein needed during the final step in the assembly of 30S ribosomal subunit, possibly for assembly of the head region. Essential for efficient processing of 16S rRNA. May be needed both before and after RbfA during the maturation of 16S rRNA. It has affinity for free ribosomal 30S subunits but not for 70S ribosomes. The chain is Ribosome maturation factor RimM from Maricaulis maris (strain MCS10) (Caulobacter maris).